The chain runs to 241 residues: Small ribosomal subunit protein uS3 (241 aa).

Positions 39–109 (IRQYITKNLS…QIRINVIEVQ (71 aa)) constitute a KH type-2 domain. The interval 214-241 (EEIPMPVPSQTPRRQRRRQQFEDRSGEE) is disordered. Residues 232–241 (QQFEDRSGEE) are compositionally biased toward basic and acidic residues.

The protein belongs to the universal ribosomal protein uS3 family. As to quaternary structure, part of the 30S ribosomal subunit. Forms a tight complex with proteins S10 and S14.

Functionally, binds the lower part of the 30S subunit head. Binds mRNA in the 70S ribosome, positioning it for translation. This Rippkaea orientalis (strain PCC 8801 / RF-1) (Cyanothece sp. (strain PCC 8801)) protein is Small ribosomal subunit protein uS3.